The sequence spans 359 residues: Aflatoxin B1 aldehyde reductase member 2 (359 aa).

A mitochondrion-targeting transit peptide spans 1 to 38 (MLSAASRVVSRAAVHCALRSPPPEARALAMSRPPPPRV). S40 is subject to Phosphoserine. NADP(+) is bound at residue D72. Catalysis depends on Y77, which acts as the Proton donor. K128 is subject to N6-acetyllysine. H141 contacts substrate. NADP(+) is bound by residues 171 to 172 (SN), Q197, 226 to 236 (NPLAGGLLTGK), and R250. An N6-succinyllysine modification is found at K236. S255 bears the Phosphoserine mark. Substrate contacts are provided by Y260 and R263. 318-326 (SSLEQLEQN) contacts NADP(+). R359 serves as a coordination point for substrate.

Belongs to the aldo/keto reductase family. Aldo/keto reductase 2 subfamily. In terms of assembly, homodimer. Detected in brain, liver, small intestine and testis, and at lower levels in heart, prostate, skeletal muscle and spleen. Detected in kidney proximal and distal tubules, endothelial cells lining the Bowman's capsules and some cysts. Detected at low levels in lung and pancreas (at protein level). Widely expressed.

It is found in the mitochondrion. It localises to the golgi apparatus. The protein resides in the cytoplasm. It carries out the reaction 4-hydroxybutanoate + NADP(+) = succinate semialdehyde + NADPH + H(+). Catalyzes the NADPH-dependent reduction of succinic semialdehyde to gamma-hydroxybutyrate. May have an important role in producing the neuromodulator gamma-hydroxybutyrate (GHB). Has broad substrate specificity. Has NADPH-dependent aldehyde reductase activity towards 2-carboxybenzaldehyde, 2-nitrobenzaldehyde and pyridine-2-aldehyde (in vitro). Can reduce 1,2-naphthoquinone and 9,10-phenanthrenequinone (in vitro). Can reduce the dialdehyde protein-binding form of aflatoxin B1 (AFB1) to the non-binding AFB1 dialcohol. May be involved in protection of liver against the toxic and carcinogenic effects of AFB1, a potent hepatocarcinogen. The polypeptide is Aflatoxin B1 aldehyde reductase member 2 (AKR7A2) (Homo sapiens (Human)).